Reading from the N-terminus, the 817-residue chain is Protein EFR3 homolog B (817 aa).

Residues Ser212, Ser214, and Ser216 each carry the phosphoserine modification.

This sequence belongs to the EFR3 family. Component of a phosphatidylinositol 4-kinase (PI4K) complex, composed of PI4KA, EFR3 (EFR3A or EFR3B), TTC7 (TTC7A or TTC7B) and HYCC (HYCC1 or HYCC2). Palmitoylated at its N-terminus, anchoring the protein to the plasma membrane.

Its subcellular location is the cell membrane. The protein localises to the cytoplasm. It is found in the cytosol. Functionally, component of a complex required to localize phosphatidylinositol 4-kinase (PI4K) to the plasma membrane. The complex acts as a regulator of phosphatidylinositol 4-phosphate (PtdIns(4)P) synthesis. In the complex, EFR3B probably acts as the membrane-anchoring component. Also involved in responsiveness to G-protein-coupled receptors; it is however unclear whether this role is direct or indirect. The chain is Protein EFR3 homolog B from Homo sapiens (Human).